A 252-amino-acid chain; its full sequence is Large ribosomal subunit protein uL4 (252 aa).

The protein belongs to the universal ribosomal protein uL4 family. Part of the 50S ribosomal subunit.

Its function is as follows. One of the primary rRNA binding proteins, this protein initially binds near the 5'-end of the 23S rRNA. It is important during the early stages of 50S assembly. It makes multiple contacts with different domains of the 23S rRNA in the assembled 50S subunit and ribosome. Forms part of the polypeptide exit tunnel. The chain is Large ribosomal subunit protein uL4 from Archaeoglobus fulgidus (strain ATCC 49558 / DSM 4304 / JCM 9628 / NBRC 100126 / VC-16).